Reading from the N-terminus, the 640-residue chain is Chaperone protein HtpG (640 aa).

The interval 1-352 (MTEQTATQNY…SADLPLNVSR (352 aa)) is a; substrate-binding. Residues 353–571 (ELLQESRDVK…DGELSPQLIR (219 aa)) are b. The segment at 572–640 (MLKQAGQAVP…VKRINSLLLK (69 aa)) is c.

The protein belongs to the heat shock protein 90 family. As to quaternary structure, homodimer.

The protein localises to the cytoplasm. Molecular chaperone. Has ATPase activity. This Acinetobacter baylyi (strain ATCC 33305 / BD413 / ADP1) protein is Chaperone protein HtpG.